We begin with the raw amino-acid sequence, 457 residues long: MTKKVYVKTFGCQMNEYDSDKMVDVLGAAEGLVKTDTPEDADVILFNTCSVREKAQEKVFSDLGRVRELKEANPNLIIGVGGCVASQEGAAIVSRAPYVDLVFGPQTLHRLPQMIDKRRESGRAQVDISFPEIEKFDHLPPARVDGPSAFVSIMEGCSKYCSYCVVPYTRGEEVSRPLDDVLTEIAGLADQGVREVTLLGQNVNAYRAGLTLGSTEIADFAQLIEYVADIPGIERIRYTTSHPKEFTQRLIDTYAKVPKLVSHLHLPVQHGSDRILMAMKRGYTVLEYKSVIRKLRAIRPDLSLSTDMIVGFPGETEEDFDKMMALVHEMKYDTSFSFIYSPRPGTPAANLHDDTPREVKLKRLQHLQATIEENVQRISDSMVGKIERILVERPARKDPNELAGRTENNRVVNFPAPIASHARLIGQMVDVKIVKAYPHSLRGELVLVHDDAPATTH.

The MTTase N-terminal domain occupies 3–120 (KKVYVKTFGC…LPQMIDKRRE (118 aa)). The [4Fe-4S] cluster site is built by C12, C49, C83, C157, C161, and C164. A Radical SAM core domain is found at 143–377 (RVDGPSAFVS…QATIEENVQR (235 aa)). In terms of domain architecture, TRAM spans 380–447 (DSMVGKIERI…PHSLRGELVL (68 aa)).

The protein belongs to the methylthiotransferase family. MiaB subfamily. Monomer. It depends on [4Fe-4S] cluster as a cofactor.

It is found in the cytoplasm. The catalysed reaction is N(6)-dimethylallyladenosine(37) in tRNA + (sulfur carrier)-SH + AH2 + 2 S-adenosyl-L-methionine = 2-methylsulfanyl-N(6)-dimethylallyladenosine(37) in tRNA + (sulfur carrier)-H + 5'-deoxyadenosine + L-methionine + A + S-adenosyl-L-homocysteine + 2 H(+). Catalyzes the methylthiolation of N6-(dimethylallyl)adenosine (i(6)A), leading to the formation of 2-methylthio-N6-(dimethylallyl)adenosine (ms(2)i(6)A) at position 37 in tRNAs that read codons beginning with uridine. This Paraburkholderia phytofirmans (strain DSM 17436 / LMG 22146 / PsJN) (Burkholderia phytofirmans) protein is tRNA-2-methylthio-N(6)-dimethylallyladenosine synthase.